Reading from the N-terminus, the 184-residue chain is Lipoprotein signal peptidase (184 aa).

3 helical membrane-spanning segments follow: residues 23–43 (FLYYKLALILFVGFVILFQVF), 88–108 (PGLVYFLQGFLSFIALFFLVF), and 110–130 (TSYNYIFWITTLAFGSLGNFF). Catalysis depends on residues aspartate 142 and aspartate 157. The helical transmembrane segment at 156–176 (ADCCITFSFIGLFLSFLIQFF) threads the bilayer.

Belongs to the peptidase A8 family.

The protein localises to the cell membrane. The enzyme catalyses Release of signal peptides from bacterial membrane prolipoproteins. Hydrolyzes -Xaa-Yaa-Zaa-|-(S,diacylglyceryl)Cys-, in which Xaa is hydrophobic (preferably Leu), and Yaa (Ala or Ser) and Zaa (Gly or Ala) have small, neutral side chains.. The protein operates within protein modification; lipoprotein biosynthesis (signal peptide cleavage). Its function is as follows. This protein specifically catalyzes the removal of signal peptides from prolipoproteins. This chain is Lipoprotein signal peptidase, found in Mycoplasma pneumoniae (strain ATCC 29342 / M129 / Subtype 1) (Mycoplasmoides pneumoniae).